A 396-amino-acid chain; its full sequence is MEFSQFKVNALMEITARPDLVFVRGQGSWLEDHAGKRYLDFVQGWAVNTLGHCAPEMKRALAEQADKLMNPSPAFYNLPSIELAQRLTSASCFDRVFFANSGAEANEGAIKLARKWGRVNRNGAYKIITMNHGFHGRTLATMSASGKPGWDTMFAPQVEGFPKAEINDLDSVRALIDAQTVAVMLEPVQGEAGVIPATREFMQGLRKLADEHGILFIVDEVQTGMGRTGSLFAYQQFDVIPDIMTLAKGIGGGIPLAALLAREEVCVFAHGDQGGTYNGNPLCAAVGVAVFDTITAPGFMEAAQARTRQLSEGLLALSAKRGLRGERGMGLLRALVLDRDDAPAIVEAARMLAPEGLLLNAPRGNLLRFMPALNVTEADMARMLEQLDGVIAAVRK.

Pyridoxal 5'-phosphate-binding positions include Gly-102–Ala-103 and Phe-134. Residue Arg-137 participates in N(2)-acetyl-L-ornithine binding. A pyridoxal 5'-phosphate-binding site is contributed by Asp-219–Gln-222. The residue at position 248 (Lys-248) is an N6-(pyridoxal phosphate)lysine. Thr-276 is a binding site for pyridoxal 5'-phosphate.

Belongs to the class-III pyridoxal-phosphate-dependent aminotransferase family. ArgD subfamily. As to quaternary structure, homodimer. Requires pyridoxal 5'-phosphate as cofactor.

Its subcellular location is the cytoplasm. The enzyme catalyses N(2)-acetyl-L-ornithine + 2-oxoglutarate = N-acetyl-L-glutamate 5-semialdehyde + L-glutamate. Its pathway is amino-acid biosynthesis; L-arginine biosynthesis; N(2)-acetyl-L-ornithine from L-glutamate: step 4/4. This chain is Acetylornithine aminotransferase 2, found in Bordetella bronchiseptica (strain ATCC BAA-588 / NCTC 13252 / RB50) (Alcaligenes bronchisepticus).